The chain runs to 377 residues: Nitric oxide reductase FlRd-NAD(+) reductase (377 aa).

This sequence belongs to the FAD-dependent oxidoreductase family. It depends on FAD as a cofactor.

It is found in the cytoplasm. The enzyme catalyses 2 reduced [nitric oxide reductase rubredoxin domain] + NAD(+) + H(+) = 2 oxidized [nitric oxide reductase rubredoxin domain] + NADH. It participates in nitrogen metabolism; nitric oxide reduction. In terms of biological role, one of at least two accessory proteins for anaerobic nitric oxide (NO) reductase. Reduces the rubredoxin moiety of NO reductase. This chain is Nitric oxide reductase FlRd-NAD(+) reductase, found in Salmonella arizonae (strain ATCC BAA-731 / CDC346-86 / RSK2980).